The chain runs to 147 residues: Sec-independent protein translocase protein TatB (147 aa).

Residues 1-21 form a helical membrane-spanning segment; the sequence is MFDVSFTELMVIGVIALVVIG. The segment at 67–147 is disordered; that stretch reads DETARSMQTS…DKTPPTGSAT (81 aa). A compositionally biased stretch (basic and acidic residues) spans 93 to 103; the sequence is AELDDTARDAS. Composition is skewed to low complexity over residues 109–120 and 129–147; these read ADAPAEPAPAVA and APPA…GSAT.

The protein belongs to the TatB family. The Tat system comprises two distinct complexes: a TatABC complex, containing multiple copies of TatA, TatB and TatC subunits, and a separate TatA complex, containing only TatA subunits. Substrates initially bind to the TatABC complex, which probably triggers association of the separate TatA complex to form the active translocon.

Its subcellular location is the cell inner membrane. In terms of biological role, part of the twin-arginine translocation (Tat) system that transports large folded proteins containing a characteristic twin-arginine motif in their signal peptide across membranes. Together with TatC, TatB is part of a receptor directly interacting with Tat signal peptides. TatB may form an oligomeric binding site that transiently accommodates folded Tat precursor proteins before their translocation. This Bordetella pertussis (strain Tohama I / ATCC BAA-589 / NCTC 13251) protein is Sec-independent protein translocase protein TatB.